Reading from the N-terminus, the 62-residue chain is Ferredoxin-1 (62 aa).

2 consecutive 4Fe-4S ferredoxin-type domains span residues 3–32 (WTVTVDTDKCTGDGECVDVCPVEVYELQDG) and 33–62 (KAVPVNEEECLGCESCVEVCEAGAITVEEN). Positions 12 and 18 each coordinate [3Fe-4S] cluster. [4Fe-4S] cluster is bound by residues Cys-22, Cys-42, Cys-45, and Cys-48. Residue Cys-52 coordinates [3Fe-4S] cluster.

As to quaternary structure, homodimer. It depends on [3Fe-4S] cluster as a cofactor. [4Fe-4S] cluster serves as cofactor.

Ferredoxins are iron-sulfur proteins that transfer electrons in a wide variety of metabolic reactions. This ferredoxin serves as a carrier for pyruvate dehydrogenase. The chain is Ferredoxin-1 from Nitratidesulfovibrio vulgaris (strain DSM 19637 / Miyazaki F) (Desulfovibrio vulgaris).